The primary structure comprises 181 residues: UPF0398 protein lin2003 (181 aa).

The protein belongs to the UPF0398 family.

This Listeria innocua serovar 6a (strain ATCC BAA-680 / CLIP 11262) protein is UPF0398 protein lin2003.